We begin with the raw amino-acid sequence, 380 residues long: Cytochrome b (380 aa).

Transmembrane regions (helical) follow at residues 33 to 53 (FGSL…FLAM), 77 to 98 (WLIR…FLHV), 113 to 133 (WNMG…GYVL), and 178 to 198 (FFAF…VHLL). The heme b site is built by His83 and His97. 2 residues coordinate heme b: His182 and His196. His201 provides a ligand contact to a ubiquinone. 4 helical membrane passes run 226–246 (IKDF…TLFF), 288–308 (LGGV…PLLH), 320–340 (ITQI…WIGG), and 347–367 (FITI…IFMP).

The protein belongs to the cytochrome b family. The cytochrome bc1 complex contains 11 subunits: 3 respiratory subunits (MT-CYB, CYC1 and UQCRFS1), 2 core proteins (UQCRC1 and UQCRC2) and 6 low-molecular weight proteins (UQCRH/QCR6, UQCRB/QCR7, UQCRQ/QCR8, UQCR10/QCR9, UQCR11/QCR10 and a cleavage product of UQCRFS1). This cytochrome bc1 complex then forms a dimer. Requires heme b as cofactor.

The protein resides in the mitochondrion inner membrane. Component of the ubiquinol-cytochrome c reductase complex (complex III or cytochrome b-c1 complex) that is part of the mitochondrial respiratory chain. The b-c1 complex mediates electron transfer from ubiquinol to cytochrome c. Contributes to the generation of a proton gradient across the mitochondrial membrane that is then used for ATP synthesis. This Microtus oregoni (Creeping vole) protein is Cytochrome b (MT-CYB).